The following is a 144-amino-acid chain: Cysteine desulfuration protein SufE (144 aa).

C51 functions as the Cysteine persulfide intermediate in the catalytic mechanism.

The protein belongs to the SufE family. Homodimer. Interacts with SufS.

The protein localises to the cytoplasm. It functions in the pathway cofactor biosynthesis; iron-sulfur cluster biosynthesis. Participates in cysteine desulfuration mediated by SufS. Cysteine desulfuration mobilizes sulfur from L-cysteine to yield L-alanine and constitutes an essential step in sulfur metabolism for biosynthesis of a variety of sulfur-containing biomolecules. Functions as a sulfur acceptor for SufS, by mediating the direct transfer of the sulfur atom from the S-sulfanylcysteine of SufS, an intermediate product of cysteine desulfuration process. In Wigglesworthia glossinidia brevipalpis, this protein is Cysteine desulfuration protein SufE.